A 191-amino-acid polypeptide reads, in one-letter code: Holliday junction branch migration complex subunit RuvA (191 aa).

A domain I region spans residues 1–64 (MIGKLTGTLL…EDAQLLYGFA (64 aa)). The domain II stretch occupies residues 65–140 (TAPERQAFRA…KLGADLGASH (76 aa)). The interval 140 to 142 (HGP) is flexible linker. Positions 143-191 (AVSGAQADILQALLALGYNDKEAAAALKALPAQVEVSDGIKWALKALTK) are domain III.

This sequence belongs to the RuvA family. Homotetramer. Forms an RuvA(8)-RuvB(12)-Holliday junction (HJ) complex. HJ DNA is sandwiched between 2 RuvA tetramers; dsDNA enters through RuvA and exits via RuvB. An RuvB hexamer assembles on each DNA strand where it exits the tetramer. Each RuvB hexamer is contacted by two RuvA subunits (via domain III) on 2 adjacent RuvB subunits; this complex drives branch migration. In the full resolvosome a probable DNA-RuvA(4)-RuvB(12)-RuvC(2) complex forms which resolves the HJ.

It localises to the cytoplasm. Functionally, the RuvA-RuvB-RuvC complex processes Holliday junction (HJ) DNA during genetic recombination and DNA repair, while the RuvA-RuvB complex plays an important role in the rescue of blocked DNA replication forks via replication fork reversal (RFR). RuvA specifically binds to HJ cruciform DNA, conferring on it an open structure. The RuvB hexamer acts as an ATP-dependent pump, pulling dsDNA into and through the RuvAB complex. HJ branch migration allows RuvC to scan DNA until it finds its consensus sequence, where it cleaves and resolves the cruciform DNA. This chain is Holliday junction branch migration complex subunit RuvA, found in Verminephrobacter eiseniae (strain EF01-2).